The sequence spans 542 residues: Chaperonin GroEL (542 aa).

ATP contacts are provided by residues 29 to 32 (TLGP), Lys-50, 86 to 90 (DGTTT), Gly-415, and Asp-495.

It belongs to the chaperonin (HSP60) family. Forms a cylinder of 14 subunits composed of two heptameric rings stacked back-to-back. Interacts with the co-chaperonin GroES.

The protein localises to the cytoplasm. The catalysed reaction is ATP + H2O + a folded polypeptide = ADP + phosphate + an unfolded polypeptide.. Together with its co-chaperonin GroES, plays an essential role in assisting protein folding. The GroEL-GroES system forms a nano-cage that allows encapsulation of the non-native substrate proteins and provides a physical environment optimized to promote and accelerate protein folding. In Azobacteroides pseudotrichonymphae genomovar. CFP2, this protein is Chaperonin GroEL.